The sequence spans 450 residues: Phosphoglucosamine mutase (450 aa).

Ser107 functions as the Phosphoserine intermediate in the catalytic mechanism. Residues Ser107, Asp246, Asp248, and Asp250 each coordinate Mg(2+). Ser107 carries the phosphoserine modification.

The protein belongs to the phosphohexose mutase family. It depends on Mg(2+) as a cofactor. In terms of processing, activated by phosphorylation.

It catalyses the reaction alpha-D-glucosamine 1-phosphate = D-glucosamine 6-phosphate. Functionally, catalyzes the conversion of glucosamine-6-phosphate to glucosamine-1-phosphate. This Dechloromonas aromatica (strain RCB) protein is Phosphoglucosamine mutase.